Consider the following 441-residue polypeptide: MMTINIEQLTEQYPLVKELIELKEVSWFNPSITRLEEGLSYVGLGSEDIQDASQRLKRFAPYLAKAFPETAKTNGIIESEVVPISEMQSVLEREYDTPIQGRLLLKKDSHLPISGSIKARGGIYEVLTHAEKLAIEAGLLTESDDYSKLLNEEFRDFFKRFSIAVGSTGNLGMSIGIMSAKLGFSVSVHMSADARAWKKNRLRALGVNVIEYAQDYGVAVAQGRKEAENDPTCFFIDDENSQTLFLGYSVAGERLKKQFDEKGIVVDAQHPLFVYLPCGVGGGPGGVAFGLKMAFGDNVHCIFAEPTHSPCMMLGVHTGLHDAISVQDIGIDNITAADGLAVGRASGFVGRAMERLLDGYLTISDERMYRLLGQLNEAENIQLEPSALAGMIGPIVVTKSVEYRARMQFDDTVMGNATHLVWATGGGMVPAEEMDSYLKNR.

An N6-(pyridoxal phosphate)lysine modification is found at Lys118.

The protein belongs to the serine/threonine dehydratase family. DsdA subfamily. Pyridoxal 5'-phosphate serves as cofactor.

The catalysed reaction is D-serine = pyruvate + NH4(+). In Vibrio cholerae serotype O1 (strain ATCC 39541 / Classical Ogawa 395 / O395), this protein is Probable D-serine dehydratase.